Consider the following 274-residue polypeptide: Non-heme haloperoxidase (274 aa).

The AB hydrolase-1 domain occupies 22–254 (PIMFHHGWPL…RLKVYPGLSH (233 aa)). Catalysis depends on residues Ser95, Asp225, and His254.

The protein belongs to the AB hydrolase superfamily. Bacterial non-heme haloperoxidase / perhydrolase family.

This Rhodococcus erythropolis (Arthrobacter picolinophilus) protein is Non-heme haloperoxidase (thcF).